A 113-amino-acid polypeptide reads, in one-letter code: uncharacterized protein (113 aa).

The SWIM-type zinc finger occupies 49–91 (FFVVVGKEEYVVEGGFCTCPDFLVNLKGKSPCAHIIAVEVAKI).

This is an uncharacterized protein from Archaeoglobus fulgidus (strain ATCC 49558 / DSM 4304 / JCM 9628 / NBRC 100126 / VC-16).